Consider the following 95-residue polypeptide: Enhancer of yellow 2b transcription factor (95 aa).

It belongs to the ENY2 family. As to expression, expressed specifically in testis.

Functionally, testis-specific paralog of the ubiquitously expressed transcription and mRNA export factor e(y)2. Cannot functionally replace e(y)2. In Drosophila melanogaster (Fruit fly), this protein is Enhancer of yellow 2b transcription factor (e(y)2b).